Here is a 71-residue protein sequence, read N- to C-terminus: Small ribosomal subunit protein bS18 (71 aa).

It belongs to the bacterial ribosomal protein bS18 family. Part of the 30S ribosomal subunit. Forms a tight heterodimer with protein bS6.

Functionally, binds as a heterodimer with protein bS6 to the central domain of the 16S rRNA, where it helps stabilize the platform of the 30S subunit. This Microcystis aeruginosa (strain NIES-843 / IAM M-2473) protein is Small ribosomal subunit protein bS18.